The following is a 361-amino-acid chain: Phosphoserine aminotransferase (361 aa).

Residue Arg43 coordinates L-glutamate. Residues Trp103, Thr153, Asp173, and Gln196 each coordinate pyridoxal 5'-phosphate. An N6-(pyridoxal phosphate)lysine modification is found at Lys197. 238-239 (NT) contributes to the pyridoxal 5'-phosphate binding site.

It belongs to the class-V pyridoxal-phosphate-dependent aminotransferase family. SerC subfamily. Homodimer. It depends on pyridoxal 5'-phosphate as a cofactor.

The protein localises to the cytoplasm. It carries out the reaction O-phospho-L-serine + 2-oxoglutarate = 3-phosphooxypyruvate + L-glutamate. It catalyses the reaction 4-(phosphooxy)-L-threonine + 2-oxoglutarate = (R)-3-hydroxy-2-oxo-4-phosphooxybutanoate + L-glutamate. Its pathway is amino-acid biosynthesis; L-serine biosynthesis; L-serine from 3-phospho-D-glycerate: step 2/3. The protein operates within cofactor biosynthesis; pyridoxine 5'-phosphate biosynthesis; pyridoxine 5'-phosphate from D-erythrose 4-phosphate: step 3/5. Catalyzes the reversible conversion of 3-phosphohydroxypyruvate to phosphoserine and of 3-hydroxy-2-oxo-4-phosphonooxybutanoate to phosphohydroxythreonine. In Hahella chejuensis (strain KCTC 2396), this protein is Phosphoserine aminotransferase.